The primary structure comprises 102 residues: Circadian clock protein KaiB3 (102 aa).

It belongs to the KaiB family. As to quaternary structure, purifies as a monomer and homotetramer. Interacts with KaiC1 and KaiC3.

In terms of biological role, a paralog of KaiB1, the major clock oscillator protein in this species. KaiB3 and KaiC3 may cross talk with the core oscillator. The monomer reduces the ATPase activity of KaiC3 by 55%, the homotetramer has no effect. Its function is as follows. A metamorphic protein which may reversibly switch between an inactive tetrameric fold and a rare thioredoxin-like monomeric fold (KaiB(fs)). The chain is Circadian clock protein KaiB3 from Synechocystis sp. (strain ATCC 27184 / PCC 6803 / Kazusa).